The chain runs to 615 residues: DNA mismatch repair protein MutL (615 aa).

Residues 370–397 (EPVAPRYTPAPASGSRPAAPWPNTQPGY) form a disordered region. Over residues 378–391 (PAPASGSRPAAPWP) the composition is skewed to low complexity.

This sequence belongs to the DNA mismatch repair MutL/HexB family.

Its function is as follows. This protein is involved in the repair of mismatches in DNA. It is required for dam-dependent methyl-directed DNA mismatch repair. May act as a 'molecular matchmaker', a protein that promotes the formation of a stable complex between two or more DNA-binding proteins in an ATP-dependent manner without itself being part of a final effector complex. In Shigella dysenteriae serotype 1 (strain Sd197), this protein is DNA mismatch repair protein MutL.